A 376-amino-acid chain; its full sequence is NAD-capped RNA hydrolase (376 aa).

Positions 182, 185, 200, and 211 each coordinate Zn(2+). Substrate-binding positions include Y222, 258-260 (AGF), E274, E278, and E321. Positions 223–351 (PRTDPCVIMV…KDGPAPILFP (129 aa)) constitute a Nudix hydrolase domain. Mg(2+)-binding residues include A258, E274, E278, and E321. The Nudix box motif lies at 259-280 (GFLEPGESLEEAVVRETYEESG). Residues 374-376 (VKM) carry the Microbody targeting signal motif.

Belongs to the Nudix hydrolase family. NudC subfamily. Homodimer. Mg(2+) serves as cofactor. Zn(2+) is required as a cofactor.

The catalysed reaction is a 5'-end NAD(+)-phospho-ribonucleoside in mRNA + H2O = a 5'-end phospho-adenosine-phospho-ribonucleoside in mRNA + beta-nicotinamide D-ribonucleotide + 2 H(+). It catalyses the reaction NAD(+) + H2O = beta-nicotinamide D-ribonucleotide + AMP + 2 H(+). It carries out the reaction NADH + H2O = reduced beta-nicotinamide D-ribonucleotide + AMP + 2 H(+). In terms of biological role, mRNA decapping enzyme that specifically removes the nicotinamide adenine dinucleotide (NAD) cap from a subset of mRNAs by hydrolyzing the diphosphate linkage to produce nicotinamide mononucleotide (NMN) and 5' monophosphate mRNA. The NAD-cap is present at the 5'-end of some RNAs; in contrast to the canonical N7 methylguanosine (m7G) cap, the NAD cap promotes mRNA decay. Mediates the hydrolysis of some nucleoside diphosphate derivatives. The protein is NAD-capped RNA hydrolase of Schizosaccharomyces pombe (strain 972 / ATCC 24843) (Fission yeast).